The primary structure comprises 241 residues: Pyridoxine 5'-phosphate synthase (241 aa).

Position 10 (Asn10) interacts with 3-amino-2-oxopropyl phosphate. Residue 12-13 (DH) participates in 1-deoxy-D-xylulose 5-phosphate binding. Position 21 (Arg21) interacts with 3-amino-2-oxopropyl phosphate. Residue His48 is the Proton acceptor of the active site. 2 residues coordinate 1-deoxy-D-xylulose 5-phosphate: Arg50 and His55. Glu75 (proton acceptor) is an active-site residue. Residue Thr105 coordinates 1-deoxy-D-xylulose 5-phosphate. His195 acts as the Proton donor in catalysis. Residues Gly196 and 217–218 (GH) each bind 3-amino-2-oxopropyl phosphate.

This sequence belongs to the PNP synthase family. Homooctamer; tetramer of dimers.

Its subcellular location is the cytoplasm. It catalyses the reaction 3-amino-2-oxopropyl phosphate + 1-deoxy-D-xylulose 5-phosphate = pyridoxine 5'-phosphate + phosphate + 2 H2O + H(+). It functions in the pathway cofactor biosynthesis; pyridoxine 5'-phosphate biosynthesis; pyridoxine 5'-phosphate from D-erythrose 4-phosphate: step 5/5. Catalyzes the complicated ring closure reaction between the two acyclic compounds 1-deoxy-D-xylulose-5-phosphate (DXP) and 3-amino-2-oxopropyl phosphate (1-amino-acetone-3-phosphate or AAP) to form pyridoxine 5'-phosphate (PNP) and inorganic phosphate. This chain is Pyridoxine 5'-phosphate synthase, found in Bdellovibrio bacteriovorus (strain ATCC 15356 / DSM 50701 / NCIMB 9529 / HD100).